Here is a 75-residue protein sequence, read N- to C-terminus: Small ribosomal subunit protein bS18 (75 aa).

This sequence belongs to the bacterial ribosomal protein bS18 family. Part of the 30S ribosomal subunit. Forms a tight heterodimer with protein bS6.

Binds as a heterodimer with protein bS6 to the central domain of the 16S rRNA, where it helps stabilize the platform of the 30S subunit. The protein is Small ribosomal subunit protein bS18 of Laribacter hongkongensis (strain HLHK9).